The sequence spans 220 residues: Aklanonic acid methyltransferase DauC (220 aa).

It belongs to the methyltransferase superfamily. DnrC family. In terms of assembly, homodimer.

It catalyses the reaction aklanonate + S-adenosyl-L-methionine = methyl aklanonate + S-adenosyl-L-homocysteine. Its pathway is antibiotic biosynthesis; daunorubicin biosynthesis. It participates in antibiotic biosynthesis; carminomycin biosynthesis. It functions in the pathway antibiotic biosynthesis; rhodomycin biosynthesis. The protein operates within antibiotic biosynthesis; aclacinomycin biosynthesis. Functionally, involved in the biosynthesis of aklavinone which is an important precursor common to the formation of the clinically significant anthracyclines such as carminomycin, daunorubicin (daunomycin), rhodomycin, aclacinomycin T (aklavin) and aclacinomycin A (aclarubicin). These compounds are aromatic polyketide antibiotics that exhibit high cytotoxicity and are widely applied in the chemotherapy of a variety of cancers. Catalyzes the methyl esterification of aklanonic acid to yield aklanonic acid methyl ester. This chain is Aklanonic acid methyltransferase DauC (dauC), found in Streptomyces sp. (strain C5).